Here is a 350-residue protein sequence, read N- to C-terminus: Phosphoribosylformylglycinamidine cyclo-ligase (350 aa).

This sequence belongs to the AIR synthase family.

It localises to the cytoplasm. It carries out the reaction 2-formamido-N(1)-(5-O-phospho-beta-D-ribosyl)acetamidine + ATP = 5-amino-1-(5-phospho-beta-D-ribosyl)imidazole + ADP + phosphate + H(+). It functions in the pathway purine metabolism; IMP biosynthesis via de novo pathway; 5-amino-1-(5-phospho-D-ribosyl)imidazole from N(2)-formyl-N(1)-(5-phospho-D-ribosyl)glycinamide: step 2/2. The protein is Phosphoribosylformylglycinamidine cyclo-ligase of Cupriavidus metallidurans (strain ATCC 43123 / DSM 2839 / NBRC 102507 / CH34) (Ralstonia metallidurans).